Consider the following 191-residue polypeptide: Ion-translocating oxidoreductase complex subunit B (191 aa).

Positions 1 to 26 are hydrophobic; it reads MSAIWIAIAVLSALSLVFGGLLGYAS. Positions 32–91 constitute a 4Fe-4S domain; that stretch reads EEDPIVEQIDAILPQSQCGQCGYPGCRPYADAVGNNGEMINKCAPGGEQTMLKLAALLNV. 12 residues coordinate [4Fe-4S] cluster: C49, C52, C57, C74, C116, C119, C122, C126, C146, C149, C152, and C156. 4Fe-4S ferredoxin-type domains are found at residues 107–136 and 137–166; these read KVAW…GATR and AMHT…MRPV.

The protein belongs to the 4Fe4S bacterial-type ferredoxin family. RnfB subfamily. In terms of assembly, the complex is composed of six subunits: RnfA, RnfB, RnfC, RnfD, RnfE and RnfG. [4Fe-4S] cluster is required as a cofactor.

It is found in the cell inner membrane. Functionally, part of a membrane-bound complex that couples electron transfer with translocation of ions across the membrane. In Erwinia tasmaniensis (strain DSM 17950 / CFBP 7177 / CIP 109463 / NCPPB 4357 / Et1/99), this protein is Ion-translocating oxidoreductase complex subunit B.